Here is a 108-residue protein sequence, read N- to C-terminus: uncharacterized protein (108 aa).

A compositionally biased stretch (polar residues) spans 1 to 14 (MSDSNSRLVYSTET). Residues 1 to 31 (MSDSNSRLVYSTETGRIDEPKAAPVRPKGDG) are disordered. Positions 15–31 (GRIDEPKAAPVRPKGDG) are enriched in basic and acidic residues.

It belongs to the SUI1 family.

This is an uncharacterized protein from Escherichia coli (strain K12).